Consider the following 279-residue polypeptide: NADPH-dependent 7-cyano-7-deazaguanine reductase (279 aa).

Residue 86–88 (IES) participates in substrate binding. Position 88 to 89 (88 to 89 (SK)) interacts with NADPH. The active-site Thioimide intermediate is C187. The active-site Proton donor is D194. 226 to 227 (HE) is a binding site for substrate. 255–256 (RG) contributes to the NADPH binding site.

Belongs to the GTP cyclohydrolase I family. QueF type 2 subfamily. As to quaternary structure, homodimer.

It is found in the cytoplasm. The catalysed reaction is 7-aminomethyl-7-carbaguanine + 2 NADP(+) = 7-cyano-7-deazaguanine + 2 NADPH + 3 H(+). The protein operates within tRNA modification; tRNA-queuosine biosynthesis. In terms of biological role, catalyzes the NADPH-dependent reduction of 7-cyano-7-deazaguanine (preQ0) to 7-aminomethyl-7-deazaguanine (preQ1). The polypeptide is NADPH-dependent 7-cyano-7-deazaguanine reductase (Actinobacillus pleuropneumoniae serotype 5b (strain L20)).